The sequence spans 201 residues: Glycerol-3-phosphate acyltransferase (201 aa).

4 helical membrane-spanning segments follow: residues 4–24 (IASLVLAYLLGSVPFAVLVSL), 84–104 (EIAMVGLAVFIGHLWPVFLAF), 116–136 (VLLAVNPWLALIAAAVWLAVA), and 157–177 (AWFIEPGVYAGLTIVIALLLV).

Belongs to the PlsY family. As to quaternary structure, probably interacts with PlsX.

It localises to the cell inner membrane. The enzyme catalyses an acyl phosphate + sn-glycerol 3-phosphate = a 1-acyl-sn-glycero-3-phosphate + phosphate. The protein operates within lipid metabolism; phospholipid metabolism. Its function is as follows. Catalyzes the transfer of an acyl group from acyl-phosphate (acyl-PO(4)) to glycerol-3-phosphate (G3P) to form lysophosphatidic acid (LPA). This enzyme utilizes acyl-phosphate as fatty acyl donor, but not acyl-CoA or acyl-ACP. The sequence is that of Glycerol-3-phosphate acyltransferase from Laribacter hongkongensis (strain HLHK9).